Consider the following 551-residue polypeptide: MAAKDVLFGSDARERMLRGVDILANAVKVTLGPKGRNVVIEKSFGAPRTTKDGVSVAKEIELADKFENMGAQMLREVASKTNDVAGDGTTTATVLAQSIVREGMKSVAAGMNPMDLKRGIDKAVAIVMDDIKASSTPVKDSSEVAQVGTISANGASDIGEMIAKAMDKVGKEGVITVEEAKSLETELDVVEGMQFDRGYLSPYFITDADKMQVEMEEPYILLFEKKLTSLQPMLPILEAVVQSSRPLLIIAEDVEGEALATLVVNKLRGGLKIAAVKAPGFGDRRKAMLEDLAILTGGQVISEDLGIKLETVTLDMLGSAKRVNITKDDTTIVDGVGDKAQIEARVTQIRRQSEETTSDYDREKLQERLAKLAGGVAVIKVGGATEIEVKEKKDRVDDALNATRAAVEEGIVPGGGVALLKASAKLAGLEGDNADQTQGIAIVARALQSPIRQIATNSGVEGSIVVGKVMENPSATFGFNAQTEEYGDMLAFGVIDPAKVVRTALQDAASVASLLITTEAAVADAPKEEGAGGGMPDMGGMGGMGGMGGMM.

ATP contacts are provided by residues 30-33 (TLGP), lysine 51, 87-91 (DGTTT), glycine 415, and aspartate 496.

The protein belongs to the chaperonin (HSP60) family. As to quaternary structure, forms a cylinder of 14 subunits composed of two heptameric rings stacked back-to-back. Interacts with the co-chaperonin GroES.

It is found in the cytoplasm. The catalysed reaction is ATP + H2O + a folded polypeptide = ADP + phosphate + an unfolded polypeptide.. In terms of biological role, together with its co-chaperonin GroES, plays an essential role in assisting protein folding. The GroEL-GroES system forms a nano-cage that allows encapsulation of the non-native substrate proteins and provides a physical environment optimized to promote and accelerate protein folding. This is Chaperonin GroEL from Maricaulis maris (strain MCS10) (Caulobacter maris).